The sequence spans 141 residues: MAKKITALIKLALPAGKATPAPPVGPALGQHGVNIAAFCKEYNAKTTDKTGLIIPVEISVYEDRSYTFILKTPPASVLLANAAKIKKGSSTPNRVNVGSITKSQLEEIASIKLPDLNTTKISSAMKIVEGTARNMGISIVD.

The protein belongs to the universal ribosomal protein uL11 family. As to quaternary structure, part of the ribosomal stalk of the 50S ribosomal subunit. Interacts with L10 and the large rRNA to form the base of the stalk. L10 forms an elongated spine to which L12 dimers bind in a sequential fashion forming a multimeric L10(L12)X complex.

Its subcellular location is the plastid. The protein localises to the chloroplast. Forms part of the ribosomal stalk which helps the ribosome interact with GTP-bound translation factors. The sequence is that of Large ribosomal subunit protein uL11c from Trieres chinensis (Marine centric diatom).